The following is a 146-amino-acid chain: NADH-quinone oxidoreductase subunit A (146 aa).

A run of 3 helical transmembrane segments spans residues 14-34 (FGLF…GGFL), 68-88 (LVAM…AWAV), and 96-116 (IGFI…IYLV).

This sequence belongs to the complex I subunit 3 family. As to quaternary structure, NDH-1 is composed of 13 different subunits. Subunits NuoA, H, J, K, L, M, N constitute the membrane sector of the complex.

The protein localises to the cell inner membrane. It carries out the reaction a quinone + NADH + 5 H(+)(in) = a quinol + NAD(+) + 4 H(+)(out). Its function is as follows. NDH-1 shuttles electrons from NADH, via FMN and iron-sulfur (Fe-S) centers, to quinones in the respiratory chain. The immediate electron acceptor for the enzyme in this species is believed to be ubiquinone. Couples the redox reaction to proton translocation (for every two electrons transferred, four hydrogen ions are translocated across the cytoplasmic membrane), and thus conserves the redox energy in a proton gradient. This Pectobacterium carotovorum subsp. carotovorum (Erwinia carotovora subsp. carotovora) protein is NADH-quinone oxidoreductase subunit A.